Reading from the N-terminus, the 500-residue chain is tRNA nucleotidyltransferase cca1 (500 aa).

A flexible loop region spans residues 122–139 (DYTNSNSSNKLVFGTPLE). Positions 231–241 (ERIGVEVDKML) match the ERhxxExxxhh motif motif.

This sequence belongs to the tRNA nucleotidyltransferase/poly(A) polymerase family.

The catalysed reaction is a tRNA precursor + 2 CTP = a tRNA with a 3' CC end + 2 diphosphate. Functionally, tRNA nucleotidyltransferase involved in the synthesis of the tRNA CCA terminus. In contrast to what is usually observed in eukaryotes for which one enzyme synthesizes the whole tRNA CCA terminus, in S.pombe, cca1 specifically adds two cytidine residues to a tRNA substrate lacking this sequence while cca2 specifically adds the terminal adenosine residue thereby completing the CCA sequence. The polypeptide is tRNA nucleotidyltransferase cca1 (Schizosaccharomyces pombe (strain 972 / ATCC 24843) (Fission yeast)).